A 371-amino-acid polypeptide reads, in one-letter code: tRNA-specific 2-thiouridylase MnmA (371 aa).

Residues 16–23 (GMSGGVDS) and Met-42 each bind ATP. Residues 102–104 (NPD) form an interaction with target base in tRNA region. The active-site Nucleophile is the Cys-107. A disulfide bridge connects residues Cys-107 and Cys-204. Residue Gly-132 participates in ATP binding. The tract at residues 154–156 (KDQ) is interaction with tRNA. Catalysis depends on Cys-204, which acts as the Cysteine persulfide intermediate. Residues 316–317 (RY) form an interaction with tRNA region.

Belongs to the MnmA/TRMU family.

The protein resides in the cytoplasm. It catalyses the reaction S-sulfanyl-L-cysteinyl-[protein] + uridine(34) in tRNA + AH2 + ATP = 2-thiouridine(34) in tRNA + L-cysteinyl-[protein] + A + AMP + diphosphate + H(+). In terms of biological role, catalyzes the 2-thiolation of uridine at the wobble position (U34) of tRNA, leading to the formation of s(2)U34. The polypeptide is tRNA-specific 2-thiouridylase MnmA (Shewanella pealeana (strain ATCC 700345 / ANG-SQ1)).